A 375-amino-acid chain; its full sequence is Digeranylgeranylglycerophospholipid reductase 1 (375 aa).

Residues A13, E32, C43, A44, G46, R92, A116, D275, G287, and L288 each contribute to the FAD site. G367 lines the a 2,3-bis-O-(geranylgeranyl)-sn-glycerol 1-phospholipid pocket.

The protein belongs to the geranylgeranyl reductase family. DGGGPL reductase subfamily. Requires FAD as cofactor.

The enzyme catalyses a 2,3-bis-O-phytanyl-sn-glycerol 1-phospholipid + 8 A = a 2,3-bis-O-(geranylgeranyl)-sn-glycerol 1-phospholipid + 8 AH2. The catalysed reaction is 2,3-bis-O-(phytanyl)-sn-glycerol 1-phosphate + 8 A = 2,3-bis-O-(geranylgeranyl)-sn-glycerol 1-phosphate + 8 AH2. It carries out the reaction CDP-2,3-bis-O-(geranylgeranyl)-sn-glycerol + 8 AH2 = CDP-2,3-bis-O-(phytanyl)-sn-glycerol + 8 A. It catalyses the reaction archaetidylserine + 8 AH2 = 2,3-bis-O-phytanyl-sn-glycero-3-phospho-L-serine + 8 A. It participates in membrane lipid metabolism; glycerophospholipid metabolism. Functionally, is involved in the reduction of 2,3-digeranylgeranylglycerophospholipids (unsaturated archaeols) into 2,3-diphytanylglycerophospholipids (saturated archaeols) in the biosynthesis of archaeal membrane lipids. Catalyzes the formation of archaetidic acid (2,3-di-O-phytanyl-sn-glyceryl phosphate) from 2,3-di-O-geranylgeranylglyceryl phosphate (DGGGP) via the hydrogenation of each double bond of the isoprenoid chains. Is also probably able to reduce double bonds of geranyl groups in CDP-2,3-bis-O-(geranylgeranyl)-sn-glycerol and archaetidylserine, thus acting at various stages in the biosynthesis of archaeal membrane lipids. The chain is Digeranylgeranylglycerophospholipid reductase 1 from Methanopyrus kandleri (strain AV19 / DSM 6324 / JCM 9639 / NBRC 100938).